Here is a 275-residue protein sequence, read N- to C-terminus: Phosphate import ATP-binding protein PstB 3 (275 aa).

The disordered stretch occupies residues 1–26; it reads MATQETDDSLISTDVQTDATERGDQP. Residues 9 to 18 are compositionally biased toward polar residues; it reads SLISTDVQTD. Positions 31-270 constitute an ABC transporter domain; the sequence is VETKHLDVHY…PEDDRVEDYI (240 aa). 63 to 70 lines the ATP pocket; sequence GPSGCGKS.

The protein belongs to the ABC transporter superfamily. Phosphate importer (TC 3.A.1.7) family. In terms of assembly, the complex is composed of two ATP-binding proteins (PstB), two transmembrane proteins (PstC and PstA) and a solute-binding protein (PstS).

The protein localises to the cell membrane. The enzyme catalyses phosphate(out) + ATP + H2O = ADP + 2 phosphate(in) + H(+). Part of the ABC transporter complex PstSACB involved in phosphate import. Responsible for energy coupling to the transport system. This chain is Phosphate import ATP-binding protein PstB 3, found in Natronomonas pharaonis (strain ATCC 35678 / DSM 2160 / CIP 103997 / JCM 8858 / NBRC 14720 / NCIMB 2260 / Gabara) (Halobacterium pharaonis).